A 418-amino-acid chain; its full sequence is Metacaspase-2 (418 aa).

The tract at residues 68 to 113 is disordered; that stretch reads PSPYTHAPHAPSPFNHAPPDSYPFTHAPPASSPFNHAPPGPPPPVH. The span at 70-80 shows a compositional bias: low complexity; it reads PYTHAPHAPSP. The span at 103–112 shows a compositional bias: pro residues; sequence HAPPGPPPPV. Active-site residues include H200 and C256. The segment at 385-406 is disordered; that stretch reads PDEEEEVNQAPQKTQEPQLSAN. Residues 393 to 405 are compositionally biased toward polar residues; the sequence is QAPQKTQEPQLSA.

It belongs to the peptidase C14B family.

Acts as a negative regulator of oxidative stress cell death and hypersensitive cell death response mediated by immune response. Acts via indirect or direct regulation of AMC1 at postranscriptional level. This chain is Metacaspase-2 (AMC2), found in Arabidopsis thaliana (Mouse-ear cress).